Here is a 249-residue protein sequence, read N- to C-terminus: Small ribosomal subunit protein uS2 (249 aa).

Belongs to the universal ribosomal protein uS2 family.

The sequence is that of Small ribosomal subunit protein uS2 from Bordetella parapertussis (strain 12822 / ATCC BAA-587 / NCTC 13253).